The chain runs to 166 residues: NAD(P)H-quinone oxidoreductase subunit I, chloroplastic (166 aa).

2 consecutive 4Fe-4S ferredoxin-type domains span residues Gly55–Lys84 and Leu95–Glu124. The [4Fe-4S] cluster site is built by Cys64, Cys67, Cys70, Cys74, Cys104, Cys107, Cys110, and Cys114.

The protein belongs to the complex I 23 kDa subunit family. NDH is composed of at least 16 different subunits, 5 of which are encoded in the nucleus. It depends on [4Fe-4S] cluster as a cofactor.

It localises to the plastid. The protein resides in the chloroplast thylakoid membrane. The enzyme catalyses a plastoquinone + NADH + (n+1) H(+)(in) = a plastoquinol + NAD(+) + n H(+)(out). It catalyses the reaction a plastoquinone + NADPH + (n+1) H(+)(in) = a plastoquinol + NADP(+) + n H(+)(out). Functionally, NDH shuttles electrons from NAD(P)H:plastoquinone, via FMN and iron-sulfur (Fe-S) centers, to quinones in the photosynthetic chain and possibly in a chloroplast respiratory chain. The immediate electron acceptor for the enzyme in this species is believed to be plastoquinone. Couples the redox reaction to proton translocation, and thus conserves the redox energy in a proton gradient. This is NAD(P)H-quinone oxidoreductase subunit I, chloroplastic from Lasianthaea macrocephala (Lipochaeta macrocephala).